A 316-amino-acid polypeptide reads, in one-letter code: ATP synthase gamma chain (316 aa).

It belongs to the ATPase gamma chain family. F-type ATPases have 2 components, CF(1) - the catalytic core - and CF(0) - the membrane proton channel. CF(1) has five subunits: alpha(3), beta(3), gamma(1), delta(1), epsilon(1). CF(0) has three main subunits: a, b and c.

The protein localises to the cellular thylakoid membrane. In terms of biological role, produces ATP from ADP in the presence of a proton gradient across the membrane. The gamma chain is believed to be important in regulating ATPase activity and the flow of protons through the CF(0) complex. This is ATP synthase gamma chain from Prochlorococcus marinus (strain MIT 9303).